The following is a 257-amino-acid chain: Ethanolamine ammonia-lyase small subunit (257 aa).

3 residues coordinate adenosylcob(III)alamin: Val-153, Glu-174, and Cys-203.

Belongs to the EutC family. As to quaternary structure, the basic unit is a heterodimer which dimerizes to form tetramers. The heterotetramers trimerize; 6 large subunits form a core ring with 6 small subunits projecting outwards. It depends on adenosylcob(III)alamin as a cofactor.

It localises to the bacterial microcompartment. The enzyme catalyses ethanolamine = acetaldehyde + NH4(+). Its pathway is amine and polyamine degradation; ethanolamine degradation. Functionally, catalyzes the deamination of various vicinal amino-alcohols to oxo compounds. Allows this organism to utilize ethanolamine as the sole source of nitrogen and carbon in the presence of external vitamin B12. This Rhodococcus erythropolis (Arthrobacter picolinophilus) protein is Ethanolamine ammonia-lyase small subunit.